We begin with the raw amino-acid sequence, 212 residues long: NADH dehydrogenase [ubiquinone] iron-sulfur protein 8, mitochondrial (212 aa).

The transit peptide at 1–34 directs the protein to the mitochondrion; the sequence is MYRLSSSMLPRALAQAMRTGHLNGQSLHSSAVAA. 4Fe-4S ferredoxin-type domains lie at 104–133 and 143–172; these read RRYP…IEAE and TRYD…EGPN. [4Fe-4S] cluster is bound by residues C113, C116, C119, C123, C152, C155, C158, and C162.

The protein belongs to the complex I 23 kDa subunit family. As to quaternary structure, complex I is composed of 45 different subunits. This is a component of the iron-sulfur (IP) fragment of the enzyme. Interacts with RAB5IF. It depends on [4Fe-4S] cluster as a cofactor.

It is found in the mitochondrion inner membrane. It catalyses the reaction a ubiquinone + NADH + 5 H(+)(in) = a ubiquinol + NAD(+) + 4 H(+)(out). Its function is as follows. Core subunit of the mitochondrial membrane respiratory chain NADH dehydrogenase (Complex I) which catalyzes electron transfer from NADH through the respiratory chain, using ubiquinone as an electron acceptor. Essential for the catalytic activity and assembly of complex I. The polypeptide is NADH dehydrogenase [ubiquinone] iron-sulfur protein 8, mitochondrial (Ndufs8) (Mus musculus (Mouse)).